The chain runs to 370 residues: MHFESPIKRRHSRQIMVGNVPVGGGAPISVQSMTNTETCDVDATVAQIRAIADAGADIVRVSIPSMDAAEAFKKIREAVSIPLVADIHFDYKIALKVAEYGVDCLRINPGNIGNKDRIRAVVDCARDKNIPIRIGVNAGSLEKDLQKKYGEPTPDALVESAFRQIQYFDELDFHEYKLSLKASDIFMTVEAYRKIASQIDNPLHLGITEAGGLRSGTVKSSIGLGLLLMDGIGDTLRVSLAADPVHEIKVGWDMLRSLKLRNRGINFIACPSCSRQNFDVIKTMNELEERLDDITIPMDVAVIGCVVNGPGEAKEADIGLAGGSPNNLIYQDGKPDSKTKNETLVDDLERMIRKKALLKEQELANIIVKN.

The [4Fe-4S] cluster site is built by Cys-270, Cys-273, Cys-305, and Glu-312.

It belongs to the IspG family. The cofactor is [4Fe-4S] cluster.

It catalyses the reaction (2E)-4-hydroxy-3-methylbut-2-enyl diphosphate + oxidized [flavodoxin] + H2O + 2 H(+) = 2-C-methyl-D-erythritol 2,4-cyclic diphosphate + reduced [flavodoxin]. It functions in the pathway isoprenoid biosynthesis; isopentenyl diphosphate biosynthesis via DXP pathway; isopentenyl diphosphate from 1-deoxy-D-xylulose 5-phosphate: step 5/6. Converts 2C-methyl-D-erythritol 2,4-cyclodiphosphate (ME-2,4cPP) into 1-hydroxy-2-methyl-2-(E)-butenyl 4-diphosphate. This is 4-hydroxy-3-methylbut-2-en-1-yl diphosphate synthase (flavodoxin) from Marinomonas sp. (strain MWYL1).